Here is a 432-residue protein sequence, read N- to C-terminus: Ornithine decarboxylase, chloroplastic (432 aa).

An N6-(pyridoxal phosphate)lysine modification is found at K95. Pyridoxal 5'-phosphate contacts are provided by residues S227, G265, and 298–301 (EPGR). 341 to 342 (YD) contacts substrate. C377 (proton donor; shared with dimeric partner) is an active-site residue. D378 contributes to the substrate binding site. Residue Y406 coordinates pyridoxal 5'-phosphate.

This sequence belongs to the Orn/Lys/Arg decarboxylase class-II family. In terms of assembly, homodimer. Only the dimer is catalytically active, as the active sites are constructed of residues from both monomers. Pyridoxal 5'-phosphate is required as a cofactor.

The protein resides in the plastid. The protein localises to the chloroplast. The catalysed reaction is L-lysine + H(+) = cadaverine + CO2. It carries out the reaction L-ornithine + H(+) = putrescine + CO2. The protein operates within alkaloid biosynthesis; nicotine biosynthesis. It participates in amine and polyamine biosynthesis; putrescine biosynthesis via L-ornithine pathway; putrescine from L-ornithine: step 1/1. Its activity is regulated as follows. Repressed by alpha-difluoromethylornithine (DFMO), 5,5'-dithiobis-(2-nitrobenzoic acid) (DTNB) and salicylaldehyde. In terms of biological role, involved in the biosynthesis of pyridine alkaloid natural products, leading mainly to the production of anabasine, anatabine, nicotine and nornicotine, effective deterrents against herbivores with antiparasitic and pesticide properties (neurotoxins); nornicotine serves as the precursor in the synthesis of the carcinogen compound N'-nitrosonornicotine (NNN). Catalyzes the first and rate-limiting step of polyamine biosynthesis that converts ornithine into putrescine, which is the precursor for the polyamines, spermidine and spermine. Can also use, with a lower efficiency, L-lysine as substrate to produce cadaverine. Polyamines are essential for cell proliferation and are implicated in cellular processes, ranging from DNA replication to apoptosis. This is Ornithine decarboxylase, chloroplastic from Nicotiana glutinosa (Tobacco).